A 244-amino-acid chain; its full sequence is tRNA (guanine-N(7)-)-methyltransferase (244 aa).

S-adenosyl-L-methionine is bound by residues Glu-75, Glu-100, Asp-127, and Asp-150. The active site involves Asp-150. Residues Lys-154, Asp-186, and 223–226 (TRFE) each bind substrate.

This sequence belongs to the class I-like SAM-binding methyltransferase superfamily. TrmB family.

It carries out the reaction guanosine(46) in tRNA + S-adenosyl-L-methionine = N(7)-methylguanosine(46) in tRNA + S-adenosyl-L-homocysteine. It participates in tRNA modification; N(7)-methylguanine-tRNA biosynthesis. In terms of biological role, catalyzes the formation of N(7)-methylguanine at position 46 (m7G46) in tRNA. The sequence is that of tRNA (guanine-N(7)-)-methyltransferase from Xylella fastidiosa (strain M12).